The chain runs to 1673 residues: AF4/FMR2 family member lilli (1673 aa).

9 disordered regions span residues 1 to 24, 54 to 80, 125 to 302, 407 to 534, 575 to 604, 722 to 1086, 1114 to 1133, 1141 to 1160, and 1187 to 1315; these read MAQQ…NNNN, YSQN…QQGI, SRSA…PPEK, QLPP…GAQN, VGTG…SNKW, RLSD…INTL, QGKL…PAAP, RMTP…PART, and KLTP…MGKE. Residues 71-80 are compositionally biased toward basic and acidic residues; the sequence is REKIERQQGI. Low complexity-rich tracts occupy residues 146–180 and 223–244; these read SLGH…QQQQ and PRTS…SGGV. T420 carries the post-translational modification Phosphothreonine. Basic and acidic residues predominate over residues 428-441; sequence LKTEKNHSLEKQDS. The span at 443 to 454 shows a compositional bias: acidic residues; it reads LENDLELSESED. Phosphoserine occurs at positions 450 and 452. The span at 465-486 shows a compositional bias: low complexity; that stretch reads GNSSNSSESDSSESGSESSSKN. Residues 491-500 are compositionally biased toward basic residues; it reads HPNHQQHHHQ. Residues 501–525 show a composition bias toward low complexity; sequence LQQQQQQQQATMQQQQVLQQQHRSQ. The segment covering 577 to 586 has biased composition (gly residues); the sequence is TGSGSGGTLS. The span at 594 to 604 shows a compositional bias: polar residues; sequence KTPSPTESNKW. Low complexity predominate over residues 724 to 757; the sequence is SDSGTSASGSSSSSSSSSDSAMGGEVVPMPGPGE. Positions 775-788 are enriched in polar residues; sequence QPTQSQKAPPSNSV. A compositionally biased stretch (basic residues) spans 802-812; sequence QRQKKPRKKKA. 2 positions are modified to phosphoserine: S821 and S822. The a.T hook DNA-binding region spans 851–863; it reads KKGRGRPRKQQQS. Positions 860–898 are enriched in low complexity; that stretch reads QQQSGGSGNLSSASAGSSSQTKGPTLTAAKKPLAKTPLA. Phosphoserine occurs at positions 871 and 873. Positions 909 to 919 are enriched in polar residues; it reads SQSSSNGNTPT. Low complexity-rich tracts occupy residues 949 to 965 and 993 to 1004; these read SSSA…SSSS and GSGSSSPSSSGS. Polar residues predominate over residues 1011–1022; that stretch reads TRSQVGSGQALA. Over residues 1034 to 1060 the composition is skewed to low complexity; that stretch reads SQHSQHLSSSDCSSSSGGCTAVCSSSS. A compositionally biased stretch (basic and acidic residues) spans 1065 to 1082; sequence EGRREKERERKPKSDKNK. Over residues 1190 to 1205 the composition is skewed to polar residues; that stretch reads PAQQNGHLTPKDQATN. Composition is skewed to basic and acidic residues over residues 1226-1243 and 1252-1282; these read EHPV…EAKF and FQLK…EQPP. S1362 is subject to Phosphoserine. A Phosphothreonine modification is found at T1364. Low complexity predominate over residues 1564-1583; sequence NTPSSISPSNSVGSQGSGSN. The segment at 1564–1588 is disordered; sequence NTPSSISPSNSVGSQGSGSNTPPGR.

Belongs to the AF4 family. In terms of assembly, component of the super elongation complex (SEC), at least composed of Ell, Cdk9, cyclin-T (CycT), lilli and ear.

The protein resides in the nucleus. Has a role in transcriptional regulation. Acts in parallel with the Ras/MAPK and the PI3K/PKB pathways in the control of cell identity and cellular growth. Essential for regulation of the cytoskeleton and cell growth but not for cell proliferation or growth rate. Required specifically for the microtubule-based basal transport of lipid droplets. Plays a partially redundant function downstream of Raf in cell fate specification in the developing eye. Pair-rule protein that regulates embryonic cellularization, gastrulation and segmentation. The polypeptide is AF4/FMR2 family member lilli (Drosophila melanogaster (Fruit fly)).